Consider the following 257-residue polypeptide: MKALPALPLMLMLLSMPPPCAPQASGIRGDALEKSCLQQPLDCDDIYAQGYQEDGVYLIYPYGPSVPVPVFCDMTTEGGKWTVFQKRFNGSVSFFRGWSDYKLGFGRADGEYWLGLQNLHLLTLKQKYELRVDLEDFENNTAYAKYIDFSISPNAISAEEDGYTLYVAGFEDGGAGDSLSYHSGQKFSTFDRDQDLFVQNCAALSSGAFWFRSCHFANLNGFYLGGSHLSYANGINWAQWKGFYYSLKRTEMKIRRA.

A signal peptide spans 1–22; that stretch reads MKALPALPLMLMLLSMPPPCAP. Positions 28-30 match the Cell attachment site motif; that stretch reads RGD. Positions 34 to 257 constitute a Fibrinogen C-terminal domain; that stretch reads KSCLQQPLDC…KRTEMKIRRA (224 aa). Residues Asn-89 and Asn-139 are each glycosylated (N-linked (GlcNAc...) asparagine).

In terms of assembly, homodimer. Can also form higher oligomers. Interacts with FBN1, FBN2 and LOX. Interacts with COL1A1 in a Ca (2+)-dependent manner. Interacts with ELN in a Ca (2+)-dependent manner; this interaction promotes ELN self-assembly.

It localises to the secreted. It is found in the extracellular space. Its subcellular location is the extracellular matrix. Could be involved in calcium-dependent cell adhesion or intercellular interactions. May contribute to the elastic fiber assembly and/or maintenance. This is Microfibril-associated glycoprotein 4 (Mfap4) from Mus musculus (Mouse).